We begin with the raw amino-acid sequence, 548 residues long: Probable nuclear hormone receptor HR3 (548 aa).

The interval 1-27 (MNNNQFHELFGSQWPPDQHGGHSSAST) is disordered. A DNA-binding region (nuclear receptor) is located at residues 101–176 (IIPCKVCGDK…LGMSRDAVKF (76 aa)). NR C4-type zinc fingers lie at residues 104 to 124 (CKVC…CEGC) and 140 to 164 (CPRN…LQKC). Positions 198–228 (MRAQNDAAPDSVYDAQQQTPSSSDQFHGHYN) are disordered. Positions 211–222 (DAQQQTPSSSDQ) are enriched in polar residues. One can recognise an NR LBD domain in the interval 295 to 539 (ISKVLVKSLA…PALYKELFSL (245 aa)).

This sequence belongs to the nuclear hormone receptor family. NR1 subfamily.

It is found in the nucleus. Putative receptor whose ligand is not yet known. This is Probable nuclear hormone receptor HR3 (HR3) from Manduca sexta (Tobacco hawkmoth).